We begin with the raw amino-acid sequence, 131 residues long: Small ribosomal subunit protein uS11 (131 aa).

Belongs to the universal ribosomal protein uS11 family. As to quaternary structure, part of the 30S ribosomal subunit. Interacts with proteins S7 and S18. Binds to IF-3.

Its function is as follows. Located on the platform of the 30S subunit, it bridges several disparate RNA helices of the 16S rRNA. Forms part of the Shine-Dalgarno cleft in the 70S ribosome. The polypeptide is Small ribosomal subunit protein uS11 (Natranaerobius thermophilus (strain ATCC BAA-1301 / DSM 18059 / JW/NM-WN-LF)).